We begin with the raw amino-acid sequence, 2230 residues long: Golgin subfamily A member 4 (2230 aa).

Residues 1–64 (MFKKLKQKIS…SGDTQSFAQK (64 aa)) form a disordered region. The residue at position 10 (Ser-10) is a Phosphoserine. The span at 12-41 (EQQQLQQALAPAQASSNSSTPTRMRSRTSS) shows a compositional bias: low complexity. Thr-39 is modified (phosphothreonine). A phosphoserine mark is found at Ser-41, Ser-71, Ser-78, and Ser-89. Over residues 87-107 (SSSKESLVRTSSRESLNRLDL) the composition is skewed to basic and acidic residues. A disordered region spans residues 87 to 127 (SSSKESLVRTSSRESLNRLDLDSSTASFDPPSDMDSEAEDL). An interaction with MACF1 region spans residues 133–203 (SLNKEQLIQR…EELQMDQQAK (71 aa)). Residues 133–2185 (SLNKEQLIQR…EYLRKVLFEY (2053 aa)) adopt a coiled-coil conformation. Phosphoserine is present on Ser-266. Residues Asn-585 and Asn-1612 are each glycosylated (N-linked (GlcNAc...) asparagine). Residues 2168–2215 (LFGEPTEFEYLRKVLFEYMMGRETKTMAKVITTVLKFPDDQTQKILER) enclose the GRIP domain. Thr-2223 carries the phosphothreonine modification.

Homodimer. Interacts with RAB6A. Interacts with GTP-bound ARL1 and ARL3. Interacts with MACF1. Directly interacts with TBC1D23. Interacts with FAM91A1; this interaction may be mediated by TBC1D23.

The protein resides in the cytoplasm. The protein localises to the golgi apparatus membrane. Its subcellular location is the golgi apparatus. It localises to the trans-Golgi network membrane. Involved in vesicular trafficking at the Golgi apparatus level. May play a role in delivery of transport vesicles containing GPI-linked proteins from the trans-Golgi network through its interaction with MACF1. Involved in endosome-to-Golgi trafficking. This chain is Golgin subfamily A member 4 (GOLGA4), found in Homo sapiens (Human).